Reading from the N-terminus, the 392-residue chain is Probable inactive serine/threonine-protein kinase DDB_G0280855 (392 aa).

A Protein kinase domain is found at 46–349 (ITKKTIYACD…IERIIQHPYF (304 aa)). Residues 52-60 (YACDINGTM) and Lys75 each bind ATP.

The protein belongs to the protein kinase superfamily. CMGC Ser/Thr protein kinase family. MAP kinase subfamily.

This is Probable inactive serine/threonine-protein kinase DDB_G0280855 from Dictyostelium discoideum (Social amoeba).